Consider the following 251-residue polypeptide: Vitamin B12 import ATP-binding protein BtuD (251 aa).

The 235-residue stretch at 2–236 (IRVNSLQVDS…EVLQSVFGTS (235 aa)) folds into the ABC transporter domain. 30–37 (GPNGCGKS) serves as a coordination point for ATP.

It belongs to the ABC transporter superfamily. Vitamin B12 importer (TC 3.A.1.13.1) family. The complex is composed of two ATP-binding proteins (BtuD), two transmembrane proteins (BtuC) and a solute-binding protein (BtuF).

It is found in the cell inner membrane. The catalysed reaction is an R-cob(III)alamin(out) + ATP + H2O = an R-cob(III)alamin(in) + ADP + phosphate + H(+). Its function is as follows. Part of the ABC transporter complex BtuCDF involved in vitamin B12 import. Responsible for energy coupling to the transport system. This Vibrio cholerae serotype O1 (strain ATCC 39541 / Classical Ogawa 395 / O395) protein is Vitamin B12 import ATP-binding protein BtuD.